Consider the following 117-residue polypeptide: Pancreatic progenitor cell differentiation and proliferation factor A (117 aa).

The disordered stretch occupies residues 22–46 (GSTSSNSSCSSSEYTGEVIPHPPGL). The span at 23-33 (STSSNSSCSSS) shows a compositional bias: low complexity.

It belongs to the PPDPF family. In terms of tissue distribution, expressed exclusively in the exocrine cells during pancreas development.

Functionally, probable regulator of exocrine pancreas development. The polypeptide is Pancreatic progenitor cell differentiation and proliferation factor A (ppdpfa) (Danio rerio (Zebrafish)).